A 171-amino-acid chain; its full sequence is Lipoprotein signal peptidase (171 aa).

A run of 3 helical transmembrane segments spans residues 7-27 (GLLA…GLYF), 64-84 (IGRW…GLWM), and 88-108 (TSRL…GNAI). Residues D118 and D136 contribute to the active site. The chain crosses the membrane as a helical span at residues 128 to 148 (SWYVFNVADAAIVAGVIGLIL).

It belongs to the peptidase A8 family.

The protein resides in the cell inner membrane. The enzyme catalyses Release of signal peptides from bacterial membrane prolipoproteins. Hydrolyzes -Xaa-Yaa-Zaa-|-(S,diacylglyceryl)Cys-, in which Xaa is hydrophobic (preferably Leu), and Yaa (Ala or Ser) and Zaa (Gly or Ala) have small, neutral side chains.. Its pathway is protein modification; lipoprotein biosynthesis (signal peptide cleavage). Functionally, this protein specifically catalyzes the removal of signal peptides from prolipoproteins. This Methylobacterium radiotolerans (strain ATCC 27329 / DSM 1819 / JCM 2831 / NBRC 15690 / NCIMB 10815 / 0-1) protein is Lipoprotein signal peptidase.